Reading from the N-terminus, the 423-residue chain is Aspartate--tRNA(Asp) ligase (423 aa).

An L-aspartate-binding site is contributed by Glu-163. Positions 185–188 (QLYK) are aspartate. Arg-207 contacts L-aspartate. ATP is bound by residues 207–209 (RAE), 215–217 (RHL), and Glu-346. Residues Glu-346 and Ser-349 each contribute to the Mg(2+) site. Residues Ser-349 and Arg-353 each contribute to the L-aspartate site. 394 to 397 (GLER) contacts ATP.

The protein belongs to the class-II aminoacyl-tRNA synthetase family. Type 2 subfamily. As to quaternary structure, homodimer. The cofactor is Mg(2+).

Its subcellular location is the cytoplasm. The catalysed reaction is tRNA(Asp) + L-aspartate + ATP = L-aspartyl-tRNA(Asp) + AMP + diphosphate. In terms of biological role, catalyzes the attachment of L-aspartate to tRNA(Asp) in a two-step reaction: L-aspartate is first activated by ATP to form Asp-AMP and then transferred to the acceptor end of tRNA(Asp). The protein is Aspartate--tRNA(Asp) ligase of Picrophilus torridus (strain ATCC 700027 / DSM 9790 / JCM 10055 / NBRC 100828 / KAW 2/3).